We begin with the raw amino-acid sequence, 88 residues long: Large ribosomal subunit protein bL31B (88 aa).

This sequence belongs to the bacterial ribosomal protein bL31 family. Type B subfamily. Part of the 50S ribosomal subunit.

This is Large ribosomal subunit protein bL31B from Burkholderia orbicola (strain MC0-3).